Here is a 317-residue protein sequence, read N- to C-terminus: Porphobilinogen deaminase (317 aa).

An S-(dipyrrolylmethanemethyl)cysteine modification is found at cysteine 245.

Belongs to the HMBS family. As to quaternary structure, monomer. Dipyrromethane is required as a cofactor.

The enzyme catalyses 4 porphobilinogen + H2O = hydroxymethylbilane + 4 NH4(+). It participates in porphyrin-containing compound metabolism; protoporphyrin-IX biosynthesis; coproporphyrinogen-III from 5-aminolevulinate: step 2/4. The protein operates within porphyrin-containing compound metabolism; chlorophyll biosynthesis. Functionally, tetrapolymerization of the monopyrrole PBG into the hydroxymethylbilane pre-uroporphyrinogen in several discrete steps. This Synechococcus sp. (strain RCC307) protein is Porphobilinogen deaminase.